Consider the following 141-residue polypeptide: Large ribosomal subunit protein uL11 (141 aa).

It belongs to the universal ribosomal protein uL11 family. In terms of assembly, part of the ribosomal stalk of the 50S ribosomal subunit. Interacts with L10 and the large rRNA to form the base of the stalk. L10 forms an elongated spine to which L12 dimers bind in a sequential fashion forming a multimeric L10(L12)X complex. Post-translationally, one or more lysine residues are methylated.

Functionally, forms part of the ribosomal stalk which helps the ribosome interact with GTP-bound translation factors. This chain is Large ribosomal subunit protein uL11, found in Desulfotalea psychrophila (strain LSv54 / DSM 12343).